The following is a 195-amino-acid chain: Rho-related protein racB (195 aa).

10–17 contributes to the GTP binding site; that stretch reads GDGAVGKT. Positions 32-40 match the Effector region motif; sequence YVPTVFDNY. Residues 57–61 and 115–118 each bind GTP; these read DTAGQ and TKCD. The residue at position 192 (Cys-192) is a Cysteine methyl ester. Cys-192 carries S-geranylgeranyl cysteine lipidation. The propeptide at 193–195 is removed in mature form; that stretch reads SIL.

Belongs to the small GTPase superfamily. Rho family. As to quaternary structure, interacts with pakB.

It localises to the cell membrane. This chain is Rho-related protein racB (racB), found in Dictyostelium discoideum (Social amoeba).